The following is a 1253-amino-acid chain: MGHSRRPVGGEKKSRGFGRSKAAADVGDGRQAGKPQVKKAVFESTKKKEIGVSDLTLLSKISNEAINDNLKLRFEHDEIYTYIGHVLVSVNPFRDLGIYTDNVLESYRGKNRLEVPPHVFAVAESAYYNMKSYKDNQCVIISGESGAGKTEAAKRIMQYIASVSGGTDSSIQQIKEMVLATNPLLESFGNAKTLRNNNSSRFGKYLELEFNTNGEPVGANITNYLLEKSRVVGQITNERNFHIFYQFTKAAPQKYRDMFGIQQPQSYLYTSRSKCYDVPGIDDSAEFRDTVNAMNVIGMTESEQDNVFRMLAAILWIGNVQFAEDDSGNAAITDQSVVDFIAYLLEVDAAQVNKAFTIRVMETARGGRRGSIYEVPLNTVQALAVRDALAKAIYFNLFDWIVQRVNSSLAARGEIANSIGILDIYGFEIFEKNSFEQLCINYVNEKLQQIFIQLTLKAEQDEYAREQIQWTPIKYFDNKVVCSLIEDKRPPGVFAALNDACATAHADSGAADNTFVGRLNFLSQNPNFENRQGQFIVKHYAGDVSYAVTGMTDKNKDQLLKDLLNLVGSSGNQFVHTLFPEQVNQDDKRRPPTASDKIKASANDLVATLMKAQPSYIRTIKPNDNKAPREYNVGNVLHQIKYLGLQENVRIRRAGFAYRQTFDKFVERFYLLSPKTSYAGDYTWTGSAESGARQILKDTSIPAEEYQMGITKVFVKTPETLFALEAMRDRYWHNMAIRIQRAWRNYLRYRIECATRIQRFWRRTTGGLEFIKLRDQGHQLLNGRKERRRMSLLGSRRFLGDYIGVGNKGGPGEMVRNGAGISGSEDILFSCRGEVLVSKFGRSSKPAPRILVLTNRHIYIIAQNILNNQLVISSERTIPIGAIKAISASNLKDDWFSIVVGSAQEPDPLLSCVFKTELFTHLNNALRGQLNLKIADHIEYSKKPGKMATVKVVKDPAVTGDDTYKSSTIHTGAGEPASSVSKPTPRPKPVSARPVTKGKLLRPGGPGGGPSKLASRPTPAAQPLPRATPQPAAAQPAAPQPAARVVPQPVAAVAASHARTGSTASVRAPPPPPPAAAPAPKKPTAKALYDFNSQQPNELSIKAGEIVQIVSKEGNGWWLCMNMATSSQGWTPEAYLEEQVAPAPKPTPPPPPPAAPRSTPTPVNGAAAAAKAKPAPPAPPAKRPNMAGRKAVPAPPPAPRDSAVSMNSHDSSGGSGRGTPNSASNASLAGGLAEALRARQHAMQGKNDDDDDW.

Residues 1 to 40 are disordered; sequence MGHSRRPVGGEKKSRGFGRSKAAADVGDGRQAGKPQVKKA. In terms of domain architecture, Myosin motor spans 50 to 729; sequence IGVSDLTLLS…TLFALEAMRD (680 aa). 143-150 is a binding site for ATP; sequence GESGAGKT. Serine 371 is modified (phosphoserine). Residues 418–500 are actin-binding; it reads SIGILDIYGF…PGVFAALNDA (83 aa). 2 consecutive IQ domains span residues 733–753 and 754–779; these read HNMA…RIEC and ATRI…QGHQ. The region spanning 787–977 is the TH1 domain; sequence RRRMSLLGSR…TIHTGAGEPA (191 aa). Disordered regions lie at residues 959–1083 and 1139–1253; these read TGDD…PKKP and QVAP…DDDW. The segment covering 1029 to 1055 has biased composition (low complexity); it reads PQPAAAQPAAPQPAARVVPQPVAAVAA. Pro residues-rich tracts occupy residues 1068 to 1081 and 1143 to 1155; these read APPP…PAPK and APKP…PPAA. Positions 1080-1141 constitute an SH3 domain; the sequence is PKKPTAKALY…PEAYLEEQVA (62 aa). 2 stretches are compositionally biased toward low complexity: residues 1156 to 1173 and 1221 to 1235; these read PRST…AKAK and NSAS…LAEA.

This sequence belongs to the TRAFAC class myosin-kinesin ATPase superfamily. Myosin family. Phosphorylation of the TEDS site (Ser-371) is required for the polarization of the actin cytoskeleton. Phosphorylation probably activates the myosin-I ATPase activity.

It localises to the cytoplasm. Its subcellular location is the cytoskeleton. The protein localises to the actin patch. Type-I myosin implicated in the organization of the actin cytoskeleton. Required for proper actin cytoskeleton polarization. At the cell cortex, assembles in patch-like structures together with proteins from the actin-polymerizing machinery and promotes actin assembly. Functions as actin nucleation-promoting factor (NPF) for the Arp2/3 complex. Plays an important role in polarized growth, spore germination, hyphal morphogenesis, and septal wall formation. The polypeptide is Myosin-1 (myoA) (Aspergillus clavatus (strain ATCC 1007 / CBS 513.65 / DSM 816 / NCTC 3887 / NRRL 1 / QM 1276 / 107)).